The chain runs to 346 residues: RNA-directed DNA methylation 4 (346 aa).

Position 1 is an N-acetylmethionine (M1). 3 stretches are compositionally biased toward acidic residues: residues 253-268 (FCDG…EDSN), 278-312 (PEEE…DDEE), and 323-332 (GDDEFDDYAE). A disordered region spans residues 253 to 346 (FCDGSDESDY…YSESDEEFES (94 aa)).

The protein belongs to the IWR1/SLC7A6OS family. In terms of assembly, interacts with NRPD1. Associates with Pol II and Pol V complexes.

Probable regulatory factor for several RNA polymerases. Effector involved in facilitation of Pol V transcription as RNA scaffold and recruitment of silencing complex to target genomic sites. The polypeptide is RNA-directed DNA methylation 4 (RDM4) (Arabidopsis thaliana (Mouse-ear cress)).